The sequence spans 246 residues: Type III pantothenate kinase (246 aa).

6 to 13 (DVGNSRIK) is a binding site for ATP. Residues tyrosine 93 and 100-103 (GSDR) contribute to the substrate site. Residue aspartate 102 is the Proton acceptor of the active site. Threonine 125 is an ATP binding site. Residue threonine 175 participates in substrate binding.

It belongs to the type III pantothenate kinase family. As to quaternary structure, homodimer. It depends on NH4(+) as a cofactor. K(+) serves as cofactor.

The protein resides in the cytoplasm. It catalyses the reaction (R)-pantothenate + ATP = (R)-4'-phosphopantothenate + ADP + H(+). Its pathway is cofactor biosynthesis; coenzyme A biosynthesis; CoA from (R)-pantothenate: step 1/5. In terms of biological role, catalyzes the phosphorylation of pantothenate (Pan), the first step in CoA biosynthesis. The sequence is that of Type III pantothenate kinase from Dichelobacter nodosus (strain VCS1703A).